Consider the following 178-residue polypeptide: ATP synthase subunit delta (178 aa).

The protein belongs to the ATPase delta chain family. As to quaternary structure, F-type ATPases have 2 components, F(1) - the catalytic core - and F(0) - the membrane proton channel. F(1) has five subunits: alpha(3), beta(3), gamma(1), delta(1), epsilon(1). F(0) has three main subunits: a(1), b(2) and c(10-14). The alpha and beta chains form an alternating ring which encloses part of the gamma chain. F(1) is attached to F(0) by a central stalk formed by the gamma and epsilon chains, while a peripheral stalk is formed by the delta and b chains.

It is found in the cell inner membrane. Its function is as follows. F(1)F(0) ATP synthase produces ATP from ADP in the presence of a proton or sodium gradient. F-type ATPases consist of two structural domains, F(1) containing the extramembraneous catalytic core and F(0) containing the membrane proton channel, linked together by a central stalk and a peripheral stalk. During catalysis, ATP synthesis in the catalytic domain of F(1) is coupled via a rotary mechanism of the central stalk subunits to proton translocation. Functionally, this protein is part of the stalk that links CF(0) to CF(1). It either transmits conformational changes from CF(0) to CF(1) or is implicated in proton conduction. The chain is ATP synthase subunit delta from Pseudomonas fluorescens (strain Pf0-1).